The chain runs to 255 residues: Acid phosphatase 1 (255 aa).

Residues 1–15 (MRIFVFLVLLTVAIG) form the signal peptide. Residue asparagine 142 is glycosylated (N-linked (GlcNAc...) asparagine).

This sequence belongs to the APS1/VSP family.

The catalysed reaction is a phosphate monoester + H2O = an alcohol + phosphate. In Solanum lycopersicum (Tomato), this protein is Acid phosphatase 1 (APS1).